A 464-amino-acid polypeptide reads, in one-letter code: tRNA modification GTPase MnmE (464 aa).

The (6S)-5-formyl-5,6,7,8-tetrahydrofolate site is built by arginine 25, glutamate 87, and lysine 130. A TrmE-type G domain is found at glycine 226–glycine 386. A K(+)-binding site is contributed by asparagine 236. Residues asparagine 236 to serine 241, threonine 255 to threonine 261, and aspartate 280 to glycine 283 contribute to the GTP site. Serine 240 contributes to the Mg(2+) binding site. K(+) is bound by residues threonine 255, isoleucine 257, and threonine 260. Mg(2+) is bound at residue threonine 261. Residue lysine 464 coordinates (6S)-5-formyl-5,6,7,8-tetrahydrofolate.

It belongs to the TRAFAC class TrmE-Era-EngA-EngB-Septin-like GTPase superfamily. TrmE GTPase family. Homodimer. Heterotetramer of two MnmE and two MnmG subunits. K(+) serves as cofactor.

The protein localises to the cytoplasm. Functionally, exhibits a very high intrinsic GTPase hydrolysis rate. Involved in the addition of a carboxymethylaminomethyl (cmnm) group at the wobble position (U34) of certain tRNAs, forming tRNA-cmnm(5)s(2)U34. In Burkholderia ambifaria (strain ATCC BAA-244 / DSM 16087 / CCUG 44356 / LMG 19182 / AMMD) (Burkholderia cepacia (strain AMMD)), this protein is tRNA modification GTPase MnmE.